A 660-amino-acid polypeptide reads, in one-letter code: Glycine betaine transporter (660 aa).

Over 1–13 the chain is Cytoplasmic; it reads MPSKTSSRFANIN. A helical transmembrane segment spans residues 14–34; the sequence is PNVFVSTIMIIAIFLAIVILA. Residues 35-52 are Periplasmic-facing; it reads PDAFELLTQQLKNWITES. Residues 53–73 traverse the membrane as a helical segment; the sequence is FSWFYVLSVAFFLIVLGYIAC. Over 74–93 the chain is Cytoplasmic; the sequence is SSSGKIKLGPDHSQPDYSNS. Residues 94–114 form a helical membrane-spanning segment; the sequence is SWFAMLFTAGMGIGLMFFGIA. Residues 115–139 lie on the Periplasmic side of the membrane; it reads EPIMHYVSPPSGEPETILAAQQSMR. A helical membrane pass occupies residues 140–160; it reads VTFFHWGLHAWGIYAIVALSL. At 161–195 the chain is on the cytoplasmic side; sequence SYFAYRHDLPLKIRSSLYPLIGKKIYGPMGDAVDT. The helical transmembrane segment at 196-216 threads the bilayer; the sequence is FATIGTIFGVATTLGFGVTQI. Over 217-230 the chain is Periplasmic; the sequence is SSGLNYLFGFEPTS. Residues 231–251 form a helical membrane-spanning segment; sequence FSKVVLIIIVSAMAALSVGLG. Residues 252–263 lie on the Cytoplasmic side of the membrane; that stretch reads LDKGVKRLAELN. Residues 264-284 form a helical membrane-spanning segment; it reads LVLAVTLLAFVFFTSATVYLL. At 285–316 the chain is on the periplasmic side; sequence QTTIQNTGQYISNLFEMTFNLYAYQPNGWIGG. The helical transmembrane segment at 317 to 337 threads the bilayer; that stretch reads WTIMYWAWWISWSPFVGMFIA. Residues 338–347 are Cytoplasmic-facing; it reads RVSRGRTIRE. The helical transmembrane segment at 348–368 threads the bilayer; the sequence is FIIGVMLIPTGFTLIWMGFMG. The Periplasmic portion of the chain corresponds to 369 to 401; sequence NAGLYSILHDGNLSLLNAVQRDSSVALFEFLHS. The chain crosses the membrane as a helical span at residues 402–422; it reads LPFSGVMSLLATVLVVLFFVT. The Cytoplasmic segment spans residues 423-446; the sequence is SADSGALVVDYLTAKSEDSPVWQR. The helical transmembrane segment at 447–467 threads the bilayer; sequence LFWIVVMAGLAIILLLAGGLT. The Periplasmic segment spans residues 468–471; it reads ALQS. A helical membrane pass occupies residues 472-492; that stretch reads ATIMSALPFTFIMLLICWGLI. Topologically, residues 493–660 are cytoplasmic; sequence KALRIDSTKM…LSVMRAQTGN (168 aa).

Belongs to the BCCT transporter (TC 2.A.15) family.

It localises to the cell inner membrane. With respect to regulation, uptake is activated by NaCl, KCl or mannose gradients across the cell membrane. Inhibited by the protonophore 3,3',4',5-tetrachlorosalicylanilide (TCS). Functionally, energy-dependent uptake of glycine betaine in response to high salinity. The polypeptide is Glycine betaine transporter (Acinetobacter baylyi (strain ATCC 33305 / BD413 / ADP1)).